The sequence spans 428 residues: Glutamate-1-semialdehyde 2,1-aminomutase (428 aa).

The residue at position 267 (lysine 267) is an N6-(pyridoxal phosphate)lysine.

This sequence belongs to the class-III pyridoxal-phosphate-dependent aminotransferase family. HemL subfamily. In terms of assembly, homodimer. The cofactor is pyridoxal 5'-phosphate.

The protein resides in the cytoplasm. It catalyses the reaction (S)-4-amino-5-oxopentanoate = 5-aminolevulinate. It functions in the pathway porphyrin-containing compound metabolism; protoporphyrin-IX biosynthesis; 5-aminolevulinate from L-glutamyl-tRNA(Glu): step 2/2. The protein operates within porphyrin-containing compound metabolism; chlorophyll biosynthesis. The chain is Glutamate-1-semialdehyde 2,1-aminomutase from Prochlorococcus marinus (strain MIT 9313).